The chain runs to 382 residues: Proton extrusion protein PxcA (382 aa).

Helical transmembrane passes span 162-182 (ILLL…TYIV), 257-277 (AIKN…VCLV), 305-325 (IILF…TVLL), and 340-360 (FILL…KYWI).

Belongs to the CemA family.

The protein resides in the cell inner membrane. Required for H(+) efflux immediately after light irradiation to form a rapid H(+) concentration gradient across the thylakoid membranes. Together with PxcL, contributes to transient H(+) uptake following dark to light transition. This is Proton extrusion protein PxcA from Parasynechococcus marenigrum (strain WH8102).